The primary structure comprises 105 residues: Thioredoxin-like protein slr0233 (105 aa).

Residues 1–102 enclose the Thioredoxin domain; that stretch reads MAVKKQFANF…QAAQLIQQLQ (102 aa). The cysteines at positions 30 and 33 are disulfide-linked.

The protein belongs to the thioredoxin family.

The polypeptide is Thioredoxin-like protein slr0233 (Synechocystis sp. (strain ATCC 27184 / PCC 6803 / Kazusa)).